Reading from the N-terminus, the 179-residue chain is Large ribosomal subunit protein uL5 (179 aa).

This sequence belongs to the universal ribosomal protein uL5 family. As to quaternary structure, part of the 50S ribosomal subunit; part of the 5S rRNA/L5/L18/L25 subcomplex. Contacts the 5S rRNA and the P site tRNA. Forms a bridge to the 30S subunit in the 70S ribosome.

Functionally, this is one of the proteins that bind and probably mediate the attachment of the 5S RNA into the large ribosomal subunit, where it forms part of the central protuberance. In the 70S ribosome it contacts protein S13 of the 30S subunit (bridge B1b), connecting the 2 subunits; this bridge is implicated in subunit movement. Contacts the P site tRNA; the 5S rRNA and some of its associated proteins might help stabilize positioning of ribosome-bound tRNAs. In Paramagnetospirillum magneticum (strain ATCC 700264 / AMB-1) (Magnetospirillum magneticum), this protein is Large ribosomal subunit protein uL5.